Reading from the N-terminus, the 355-residue chain is MFTLSDFDFNLPPELIAQTALPDRTASRLLEVDRSVEPARLVDRHFAELPSCIAPGDLLVFNDTKVLKARFFGQKASGGKIEVLIERVTGTHTALAQIRASKSPGAGTTLRLADAFDVTVGERVEPFFTLHFPAPCLDLIEQYGRLPLPPYIEHDPDATDETRYQTVYASNPGAVAAPTAGLHFDQPLLEQLDALGVERATLTLHVGAGTFQPVRVDNIAEHKMHSEWYDLPQSLVDKIAATRARGGNVIAVGTTSMRALEAAARSADEAGRPLAATQAETDIFITPGYRFRVVDRLVTNFHLPKSTLLMLVSAFAGVETIRAAYRHAIEERYRFFSYGDAMLLTRRDTPEAPGA.

It belongs to the QueA family. As to quaternary structure, monomer.

Its subcellular location is the cytoplasm. The enzyme catalyses 7-aminomethyl-7-carbaguanosine(34) in tRNA + S-adenosyl-L-methionine = epoxyqueuosine(34) in tRNA + adenine + L-methionine + 2 H(+). The protein operates within tRNA modification; tRNA-queuosine biosynthesis. Functionally, transfers and isomerizes the ribose moiety from AdoMet to the 7-aminomethyl group of 7-deazaguanine (preQ1-tRNA) to give epoxyqueuosine (oQ-tRNA). This Burkholderia cenocepacia (strain ATCC BAA-245 / DSM 16553 / LMG 16656 / NCTC 13227 / J2315 / CF5610) (Burkholderia cepacia (strain J2315)) protein is S-adenosylmethionine:tRNA ribosyltransferase-isomerase.